Reading from the N-terminus, the 364-residue chain is DNA polymerase IV (364 aa).

Residues 14 to 198 (IIHIDMDAFF…LPIEKFHGVG (185 aa)) enclose the UmuC domain. Asp-18 and Asp-116 together coordinate Mg(2+). Glu-117 is a catalytic residue.

It belongs to the DNA polymerase type-Y family. Monomer. The cofactor is Mg(2+).

The protein resides in the cytoplasm. The enzyme catalyses DNA(n) + a 2'-deoxyribonucleoside 5'-triphosphate = DNA(n+1) + diphosphate. Its function is as follows. Poorly processive, error-prone DNA polymerase involved in untargeted mutagenesis. Copies undamaged DNA at stalled replication forks, which arise in vivo from mismatched or misaligned primer ends. These misaligned primers can be extended by PolIV. Exhibits no 3'-5' exonuclease (proofreading) activity. May be involved in translesional synthesis, in conjunction with the beta clamp from PolIII. This Streptococcus pyogenes serotype M1 protein is DNA polymerase IV.